The following is a 293-amino-acid chain: Nitrogenase iron protein (293 aa).

10–17 contributes to the ATP binding site; that stretch reads GKGGIGKS. C98 is a [4Fe-4S] cluster binding site. At R101 the chain carries ADP-ribosylarginine; by dinitrogenase reductase ADP-ribosyltransferase. [4Fe-4S] cluster is bound at residue C133.

Belongs to the NifH/BchL/ChlL family. In terms of assembly, homodimer. The cofactor is [4Fe-4S] cluster. Post-translationally, the reversible ADP-ribosylation of Arg-101 inactivates the nitrogenase reductase and regulates nitrogenase activity.

It catalyses the reaction N2 + 8 reduced [2Fe-2S]-[ferredoxin] + 16 ATP + 16 H2O = H2 + 8 oxidized [2Fe-2S]-[ferredoxin] + 2 NH4(+) + 16 ADP + 16 phosphate + 6 H(+). In terms of biological role, the key enzymatic reactions in nitrogen fixation are catalyzed by the nitrogenase complex, which has 2 components: the iron protein and the molybdenum-iron protein. The polypeptide is Nitrogenase iron protein (Stutzerimonas stutzeri (strain A1501) (Pseudomonas stutzeri)).